The following is a 115-amino-acid chain: Replication initiation control protein YabA (115 aa).

Zn(2+) is bound by residues histidine 85, cysteine 87, cysteine 101, and cysteine 104.

Belongs to the YabA family. In terms of assembly, homotetramer. Interacts with both DnaA and DnaN, acting as a bridge between these two proteins. The cofactor is Zn(2+).

The protein resides in the cytoplasm. It is found in the nucleoid. In terms of biological role, involved in control of chromosome replication initiation. Inhibits the cooperative binding of DnaA to the oriC region, thus negatively regulating initiation of chromosome replication. Inhibits the ability of DnaA-ATP to form a helix on DNA; does not disassemble preformed DnaA-DNA helices. Decreases the residence time of DnaA on the chromosome at its binding sites (oriC, replication forks and promoter-binding sites). Tethers DnaA to the replication machinery via the DNA polymerase beta sliding clamp subunit (dnaN). Associates with oriC and other DnaA targets on the chromosome in a DnaA-dependent manner. This Lactiplantibacillus plantarum (strain ATCC BAA-793 / NCIMB 8826 / WCFS1) (Lactobacillus plantarum) protein is Replication initiation control protein YabA.